Consider the following 507-residue polypeptide: 3-oxosteroid 1-dehydrogenase (507 aa).

9–38 provides a ligand contact to FAD; that stretch reads DLLVVGSGGGALTGAYTAAAQGLTTIVLEK. The tract at residues 299–385 is disordered; the sequence is GLVVDSPGSV…LPRPDYRPER (87 aa).

It belongs to the FAD-dependent oxidoreductase 2 family. 3-oxosteroid dehydrogenase subfamily. It depends on FAD as a cofactor.

The protein resides in the cell membrane. It catalyses the reaction a 3-oxosteroid + A = a 3-oxo-Delta(1)-steroid + AH2. It participates in lipid metabolism; steroid degradation. Functionally, catalyzes the elimination of the C-1 and C-2 hydrogen atoms of the A-ring from the polycyclic ring structure of 3-ketosteroids. This Rhodococcus opacus (Nocardia opaca) protein is 3-oxosteroid 1-dehydrogenase.